A 215-amino-acid chain; its full sequence is MPIQPPSKGTLYIVSAPSGAGKTSLVRALLERVAGIQVSVSHTTRAMRPGEQNGINYHFVDVATFERLIESGDFIEHARVFDNYYGTSRAAVQALLDAGQDVILEIDWQGARQVREAFDEAVSIFILPPSREALHARLAGRGTDDAATIARRMRDAVDEMSHYDEYEHVIINDTFDHALDELSCLVHAQRTRMPRVQAEHAPLLAALLSRVEDVE.

A Guanylate kinase-like domain is found at 9–187 (GTLYIVSAPS…ALDELSCLVH (179 aa)). 16–23 (APSGAGKT) serves as a coordination point for ATP.

It belongs to the guanylate kinase family.

The protein localises to the cytoplasm. The enzyme catalyses GMP + ATP = GDP + ADP. Essential for recycling GMP and indirectly, cGMP. The chain is Guanylate kinase from Chromohalobacter salexigens (strain ATCC BAA-138 / DSM 3043 / CIP 106854 / NCIMB 13768 / 1H11).